The primary structure comprises 534 residues: Zinc finger protein 703-A (534 aa).

Disordered regions lie at residues 1 to 35 (MNCS…THPV), 90 to 251 (SQIG…VAPV), and 300 to 320 (QLPG…LTGA). Composition is skewed to low complexity over residues 15–34 (QSSS…PTHP), 115–124 (RSSSLKLGES), and 146–155 (GSSAGGSADK). Polar residues predominate over residues 173 to 182 (SPSSRVSSPG). Over residues 185–200 (CDSKNNESQEKKEPEA) the composition is skewed to basic and acidic residues. Polar residues predominate over residues 204 to 217 (SLETSQANPTLTRA). The segment covering 218–229 (SISNSSAESSQS) has biased composition (low complexity). A compositionally biased stretch (polar residues) spans 230 to 239 (GDVTPSSKSD). The C2H2-type zinc finger occupies 406–434 (HICNWVSASGPCDKRFATSEELLAHLRTH).

The protein belongs to the Elbow/Noc family.

The protein localises to the nucleus. It is found in the cytoplasm. Its function is as follows. Transcriptional corepressor which does not bind directly to DNA and may regulate transcription through recruitment of histone deacetylases to gene promoters. Regulates cell adhesion, migration and proliferation. Involved in specification of the lateral neural plate border (NPB). May be required for segmental gene expression during hindbrain development. This is Zinc finger protein 703-A (znf703-a) from Xenopus laevis (African clawed frog).